Consider the following 482-residue polypeptide: 2-succinylbenzoate--CoA ligase (482 aa).

Belongs to the ATP-dependent AMP-binding enzyme family. MenE subfamily.

The catalysed reaction is 2-succinylbenzoate + ATP + CoA = 2-succinylbenzoyl-CoA + AMP + diphosphate. It functions in the pathway quinol/quinone metabolism; 1,4-dihydroxy-2-naphthoate biosynthesis; 1,4-dihydroxy-2-naphthoate from chorismate: step 5/7. Its pathway is quinol/quinone metabolism; menaquinone biosynthesis. In terms of biological role, converts 2-succinylbenzoate (OSB) to 2-succinylbenzoyl-CoA (OSB-CoA). This Bacillus cereus (strain AH820) protein is 2-succinylbenzoate--CoA ligase.